A 423-amino-acid polypeptide reads, in one-letter code: UPF0229 protein PFLU_5583 (423 aa).

Residues 64–109 (LHHGRGGKQTVVHPGNKEFTTGEHIQRPQGGGGGKGPGKAGNSGEG) form a disordered region. The segment covering 92 to 107 (QGGGGGKGPGKAGNSG) has biased composition (gly residues).

It belongs to the UPF0229 family.

The chain is UPF0229 protein PFLU_5583 from Pseudomonas fluorescens (strain SBW25).